We begin with the raw amino-acid sequence, 172 residues long: MSAQVSLELHHRISQFLFHEASLLDDWKFRDWLAQLDEEIRYTMRTTVNAQTRDRRKGVQPPTTWIFNDTKDQLERRIARLETGMAWAEEPPSRTRHLISNCQVSETDIPNVFAVRVNYLLYRAQKERDETFYVGTRFDKVRRLEYDNWRLLERDIVLDQAVITSHNLSVLF.

It belongs to the bacterial ring-hydroxylating dioxygenase beta subunit family. This dioxygenase system consists of four proteins: the two subunits of the hydroxylase component (HcaE and HcaF), a ferredoxin (HcaC) and a ferredoxin reductase (HcaD).

The enzyme catalyses 3-phenylpropanoate + NADH + O2 + H(+) = 3-(cis-5,6-dihydroxycyclohexa-1,3-dien-1-yl)propanoate + NAD(+). The catalysed reaction is (E)-cinnamate + NADH + O2 + H(+) = (2E)-3-(cis-5,6-dihydroxycyclohexa-1,3-dien-1-yl)prop-2-enoate + NAD(+). It participates in aromatic compound metabolism; 3-phenylpropanoate degradation. Part of the multicomponent 3-phenylpropionate dioxygenase. Converts 3-phenylpropionic acid (PP) and cinnamic acid (CI) into 3-phenylpropionate-dihydrodiol (PP-dihydrodiol) and cinnamic acid-dihydrodiol (CI-dihydrodiol), respectively. This chain is 3-phenylpropionate/cinnamic acid dioxygenase subunit beta, found in Shigella flexneri serotype 5b (strain 8401).